Here is a 353-residue protein sequence, read N- to C-terminus: D-alanine--D-alanine ligase (353 aa).

The region spanning 141–349 (KAALAGAGLA…LEQLVHELLE (209 aa)) is the ATP-grasp domain. 176 to 231 (ESGLCYPCFIKPANLGSSVGISKARNREELIHGLRLAATLDPRLVVEQGVQARELE) contacts ATP. The Mg(2+) site is built by Asp302, Glu316, and Asn318.

This sequence belongs to the D-alanine--D-alanine ligase family. Mg(2+) serves as cofactor. Requires Mn(2+) as cofactor.

It is found in the cytoplasm. It catalyses the reaction 2 D-alanine + ATP = D-alanyl-D-alanine + ADP + phosphate + H(+). Its pathway is cell wall biogenesis; peptidoglycan biosynthesis. Functionally, cell wall formation. This Parasynechococcus marenigrum (strain WH8102) protein is D-alanine--D-alanine ligase.